The sequence spans 702 residues: Sodium/hydrogen exchanger 6 (702 aa).

12 helical membrane passes run 72-92, 104-124, 177-197, 212-232, 253-273, 279-299, 325-345, 373-393, 415-435, 437-457, 480-500, and 516-536; these read SANLLIFILLLTLTILTIWLF, GLAMIYGLLVGLVLRYGIHVP, VTFDPEVFFNILLPPIIFYAG, ILAYAFLGTAISCFVIGSIMY, CLLFGAIVSATDPVTVLAIFH, VELYALLFGESVLNDAVAIVL, IGIFLGIFSGSFAMGAATGVV, TFLLAEAWGFTGVVAVLFCGI, FELLNFLAENFIFSYMGLTLF, FQNHVFNPTFVVGAFIAIFLG, NFQHMMMFAGLRGAMAFALAI, and LLIVFFTVWVFGGGTTAMLSC.

This sequence belongs to the monovalent cation:proton antiporter 1 (CPA1) transporter (TC 2.A.36) family. As to quaternary structure, homodimer. Interacts with RACK1; regulates the distribution of SLC9A6 between endosomes and the plasma membrane. Ubiquitinated (in vitro). In terms of processing, glycosylated.

It localises to the endosome membrane. The protein resides in the recycling endosome membrane. The protein localises to the early endosome membrane. Its subcellular location is the late endosome membrane. It is found in the cell membrane. The catalysed reaction is Na(+)(in) + H(+)(out) = Na(+)(out) + H(+)(in). It carries out the reaction K(+)(in) + H(+)(out) = K(+)(out) + H(+)(in). In terms of biological role, endosomal Na(+), K(+)/H(+) antiporter. Mediates the electroneutral exchange of endosomal luminal H(+) for a cytosolic Na(+) or K(+). By facilitating proton efflux, SLC9A6 counteracts the acidity generated by vacuolar (V)-ATPase, thereby limiting luminal acidification. Responsible for alkalizing and maintaining the endosomal pH, and consequently in, e.g., endosome maturation and trafficking of recycling endosomal cargo. Plays a critical role during neurodevelopment by regulating synaptic development and plasticity. Implicated in the maintenance of cell polarity in a manner that is dependent on its ability to modulate intravesicular pH. Regulates intracelular pH in some specialized cells, osteoclasts and stereocilia where this transporter localizes to the plasma membrane. This is Sodium/hydrogen exchanger 6 (Slc9a6) from Mus musculus (Mouse).